Here is a 304-residue protein sequence, read N- to C-terminus: Putative dihydroorotate dehydrogenase A (fumarate) (304 aa).

FMN is bound by residues serine 21 and 45–46 (KS). Substrate is bound by residues lysine 45, 69–73 (NAVGL), and asparagine 129. Asparagine 129 serves as a coordination point for FMN. Cysteine 132 acts as the Nucleophile in catalysis. Residues lysine 168 and isoleucine 194 each contribute to the FMN site. 195-196 (NT) lines the substrate pocket. FMN-binding positions include glycine 220, 246-247 (GG), and 268-269 (GS).

The protein belongs to the dihydroorotate dehydrogenase family. Type 1 subfamily. As to quaternary structure, homodimer. FMN is required as a cofactor.

It localises to the cytoplasm. It catalyses the reaction (S)-dihydroorotate + fumarate = orotate + succinate. It functions in the pathway pyrimidine metabolism; UMP biosynthesis via de novo pathway. In terms of biological role, catalyzes the conversion of dihydroorotate to orotate with fumarate as the electron acceptor. This chain is Putative dihydroorotate dehydrogenase A (fumarate) (pyrD), found in Pediococcus pentosaceus (strain ATCC 25745 / CCUG 21536 / LMG 10740 / 183-1w).